The sequence spans 415 residues: Gamma-glutamyl phosphate reductase 1 (415 aa).

The protein belongs to the gamma-glutamyl phosphate reductase family.

Its subcellular location is the cytoplasm. The catalysed reaction is L-glutamate 5-semialdehyde + phosphate + NADP(+) = L-glutamyl 5-phosphate + NADPH + H(+). Its pathway is amino-acid biosynthesis; L-proline biosynthesis; L-glutamate 5-semialdehyde from L-glutamate: step 2/2. Functionally, catalyzes the NADPH-dependent reduction of L-glutamate 5-phosphate into L-glutamate 5-semialdehyde and phosphate. The product spontaneously undergoes cyclization to form 1-pyrroline-5-carboxylate. This Bacillus licheniformis (strain ATCC 14580 / DSM 13 / JCM 2505 / CCUG 7422 / NBRC 12200 / NCIMB 9375 / NCTC 10341 / NRRL NRS-1264 / Gibson 46) protein is Gamma-glutamyl phosphate reductase 1.